We begin with the raw amino-acid sequence, 510 residues long: Catalase (510 aa).

Residues 1-26 (MPLLNWSRHMVCLTAAGLITVPTVYA) form the signal peptide. Active-site residues include H78 and N150. Residue Y358 participates in heme binding. Residues 386–400 (NQDGALNTGHTTSGV) show a composition bias toward polar residues. Positions 386–412 (NQDGALNTGHTTSGVNYEPSRLEPRPA) are disordered.

It belongs to the catalase family. The cofactor is heme.

It localises to the periplasm. The enzyme catalyses 2 H2O2 = O2 + 2 H2O. Functionally, decomposes hydrogen peroxide into water and oxygen; serves to protect cells from the toxic effects of hydrogen peroxide. This chain is Catalase (katB), found in Pseudomonas syringae pv. syringae.